Reading from the N-terminus, the 259-residue chain is Undecaprenyl-diphosphatase 3 (259 aa).

The next 8 membrane-spanning stretches (helical) occupy residues 1–21 (MNWLEAFILGIIQGLTEFLPI), 39–59 (AGLFLDTMLHIGTLLAVFIYY), 71–91 (FSKLMLLLIVGTIPAVVIGLL), 99–119 (ISKTGITIGWEFLVTGFFLYM), 133–153 (ITYKDAFIIGSFXAVAIFPAI), 174–194 (AYFSFLLSTPAIVGAIILQFV), 208–228 (SLIVGTLSAAFFGYIAVSWMI), and 236–256 (LKVFAYYVWGLGILILTLQFT).

This sequence belongs to the UppP family.

It is found in the cell membrane. The enzyme catalyses di-trans,octa-cis-undecaprenyl diphosphate + H2O = di-trans,octa-cis-undecaprenyl phosphate + phosphate + H(+). Catalyzes the dephosphorylation of undecaprenyl diphosphate (UPP). Confers resistance to bacitracin. This is Undecaprenyl-diphosphatase 3 from Bacillus cereus (strain ATCC 10987 / NRS 248).